The following is a 327-amino-acid chain: Microtubule-associated protein RP/EB family member 2 (327 aa).

Positions 1–17 (MPGPTQTLSPNGENNND) are enriched in polar residues. Residues 1–20 (MPGPTQTLSPNGENNNDVIH) are disordered. One can recognise a Calponin-homology (CH) domain in the interval 56–158 (TMSRHDIIAW…FIQWFKKFFD (103 aa)). Disordered regions lie at residues 170–238 (EARQ…DKDL) and 295–327 (LYSSEEQESHTEQHEGEEEQEHGHEEAEQQEEY). The EB1 C-terminal domain maps to 234–304 (SDKDLETQVS…LYSSEEQESH (71 aa)).

It belongs to the MAPRE family.

Its subcellular location is the cytoplasm. It localises to the cytoskeleton. Its function is as follows. May be involved in microtubule polymerization, and spindle function by stabilizing microtubules and anchoring them at centrosomes. This chain is Microtubule-associated protein RP/EB family member 2 (mapre2), found in Xenopus laevis (African clawed frog).